Reading from the N-terminus, the 509-residue chain is Cytochrome P450 monooxygenase FUP2 (509 aa).

2 helical membrane passes run 16 to 36 (FGLA…YGCF) and 224 to 244 (MVEA…FGIA). Residue Cys450 participates in heme binding.

Belongs to the cytochrome P450 family. Requires heme as cofactor.

It is found in the membrane. Its pathway is secondary metabolite biosynthesis. In terms of biological role, cytochrome P450 monooxygenase; part of the gene cluster that mediates the biosynthesis of the mycotoxin fusaproliferin (FUP) that belongs to the class of bicyclic sesterterpenoids. FUP2 introduces a hydroxyl group at the C-24 position resulting in the formation of preterpestacin IIa, which can be further oxidized. The oxidation of the hydroxyl group at C-24 to an aldehyde and further to a carboxylic group takes place via unspecific alcohol and aldehyde dehydrogenases and leads to the shunt products preterpestacin IIc and preterpestacin IIb, respectively. The FUP biosynthetic pathway starts with the enzyme encoded by FUP1 that combines a C-terminal prenyltransferase domain responsible for the synthesis of geranylgeranyl diphosphate with the N-terminal terpene cyclase domain, to yield preterpestacin I. Preterpestacin I is then decorated by oxygenation steps that are catalyzed by two cytochrome P450 monooxygenases. First, FUP2 introduces a hydroxyl group at the C-24 position resulting in the formation of preterpestacin IIa. The second P450 monooxygenase catalyzes the hydroxylation at C-16 and C-17 of preterpestacin IIa, producing preterpestacin III. Subsequently, the FAD-dependent oxidoreductase FUP4 catalyzes the oxidation of the hydroxy group at the C-16 position to a keto group, leading to the formation of (-)-terpestacin, which is the immediate precursor of FUP. The final step in the proposed biosynthetic pathway is the addition of an acetyl group at the C-24 position of terpestacin, which is catalyzed by the acetyltransferase FUP5. The protein is Cytochrome P450 monooxygenase FUP2 of Fusarium proliferatum (strain ET1) (Orchid endophyte fungus).